A 347-amino-acid chain; its full sequence is Protein RecA (347 aa).

66 to 73 (GPESSGKT) provides a ligand contact to ATP. The segment at 328 to 347 (MPKPNAPKATDEALDETGTD) is disordered.

This sequence belongs to the RecA family.

Its subcellular location is the cytoplasm. Can catalyze the hydrolysis of ATP in the presence of single-stranded DNA, the ATP-dependent uptake of single-stranded DNA by duplex DNA, and the ATP-dependent hybridization of homologous single-stranded DNAs. It interacts with LexA causing its activation and leading to its autocatalytic cleavage. This chain is Protein RecA, found in Hydrogenovibrio crunogenus (strain DSM 25203 / XCL-2) (Thiomicrospira crunogena).